The chain runs to 1017 residues: Pikachurin (1017 aa).

Residues 1–24 form the signal peptide; sequence MDLIRGVLLRLLLLASSLGPGAVS. 2 consecutive Fibronectin type-III domains span residues 37–136 and 144–239; these read PPLD…TLSQ and APQQ…TLCP. Asn-47 is a glycosylation site (N-linked (GlcNAc...) asparagine). In terms of domain architecture, EGF-like 1 spans 343–381; it reads FDMPCDETLCSADSFCVNDYTWGGSRCQCTLGKGGESCS. 11 disulfides stabilise this stretch: Cys-347–Cys-358, Cys-352–Cys-369, Cys-371–Cys-380, Cys-534–Cys-564, Cys-569–Cys-580, Cys-574–Cys-590, Cys-592–Cys-601, Cys-788–Cys-799, Cys-793–Cys-808, Cys-810–Cys-819, and Cys-987–Cys-1014. Positions 386–564 constitute a Laminin G-like 1 domain; it reads IQYPQFFGHS…ALSGADVGEC (179 aa). EGF-like domains are found at residues 565–602 and 784–820; these read SSGICDEASCIHGGTCTAIKADSYICLCPLGFKGRHCE and AAHPCVRAPCAHGGSCRPRKEGYDCDCPLGFEGLHCQ. In terms of domain architecture, Laminin G-like 2 spans 609 to 788; sequence IPQFRESLRS…VNVENAAHPC (180 aa). Residues 835–1014 enclose the Laminin G-like 3 domain; that stretch reads IEIPQFIGRS…AVDGKNINTC (180 aa).

In terms of assembly, interacts with DAG1 alpha-dystroglycan. Interacts with GPR158 and GPR179; transsynaptic interaction is required for synaptic organization of photoreceptor cells. O-glycosylated; contains chondroitin sulfate and heparan sulfate.

Its subcellular location is the secreted. It localises to the extracellular space. It is found in the extracellular matrix. The protein localises to the synaptic cleft. The protein resides in the presynaptic active zone. Its function is as follows. Involved in both the retinal photoreceptor ribbon synapse formation and physiological functions of visual perception. Plays a key role in the synaptic organization of photoreceptors by mediating transsynaptic interaction between alpha-dystroglycan and GPR179 on the postsynaptic membrane. Necessary for proper bipolar dendritic tip apposition to the photoreceptor ribbon synapse. Promotes matrix assembly and cell adhesiveness. The polypeptide is Pikachurin (EGFLAM) (Homo sapiens (Human)).